A 153-amino-acid polypeptide reads, in one-letter code: UPF0311 protein Rpal_1987 (153 aa).

Belongs to the UPF0311 family.

This Rhodopseudomonas palustris (strain TIE-1) protein is UPF0311 protein Rpal_1987.